We begin with the raw amino-acid sequence, 309 residues long: NAD-dependent protein deacylase sirtuin-5A, mitochondrial (309 aa).

Residues 1–35 constitute a mitochondrion transit peptide; the sequence is MILLTFHTRRLVSHAYCGLKPASQKKSIALEMTRP. In terms of domain architecture, Deacetylase sirtuin-type spans 36–306; that stretch reads SSNLADFREA…PPALARHETE (271 aa). 57–76 is an NAD(+) binding site; it reads GAGVSAESGVPTFRGAGGYW. The substrate site is built by Tyr-101 and Arg-104. 139-142 contacts NAD(+); the sequence is QNID. His-157 serves as the catalytic Proton acceptor. Zn(2+) contacts are provided by Cys-165, Cys-168, Cys-206, and Cys-211. NAD(+) contacts are provided by residues 248 to 250, 274 to 276, and Cys-292; these read GTS and NME.

Belongs to the sirtuin family. Class III subfamily. Requires Zn(2+) as cofactor.

It localises to the mitochondrion. Its subcellular location is the cytoplasm. The protein resides in the cytosol. The protein localises to the nucleus. The enzyme catalyses N(6)-malonyl-L-lysyl-[protein] + NAD(+) + H2O = 2''-O-malonyl-ADP-D-ribose + nicotinamide + L-lysyl-[protein]. It catalyses the reaction N(6)-succinyl-L-lysyl-[protein] + NAD(+) + H2O = 2''-O-succinyl-ADP-D-ribose + nicotinamide + L-lysyl-[protein]. The catalysed reaction is N(6)-glutaryl-L-lysyl-[protein] + NAD(+) + H2O = 2''-O-glutaryl-ADP-D-ribose + nicotinamide + L-lysyl-[protein]. Its function is as follows. NAD-dependent lysine demalonylase, desuccinylase and deglutarylase that specifically removes malonyl, succinyl and glutaryl groups on target proteins. Has weak NAD-dependent protein deacetylase activity; however this activity may not be physiologically relevant in vivo. This is NAD-dependent protein deacylase sirtuin-5A, mitochondrial (sirt5-a) from Xenopus laevis (African clawed frog).